The following is a 452-amino-acid chain: NADH-quinone oxidoreductase subunit H (452 aa).

Transmembrane regions (helical) follow at residues 28-48 (IILI…LMMI), 96-116 (VIYI…FSVI), 136-156 (LPVA…GIVL), 177-197 (VISY…YAGT), 210-230 (IWFA…MIGE), 264-286 (AEYV…GYLA), 301-321 (WWPA…FVWV), 335-355 (KLGW…VAVI), and 366-386 (YVTA…LWAW).

This sequence belongs to the complex I subunit 1 family. In terms of assembly, NDH-1 is composed of 14 different subunits. Subunits NuoA, H, J, K, L, M, N constitute the membrane sector of the complex.

It localises to the cell membrane. It catalyses the reaction a quinone + NADH + 5 H(+)(in) = a quinol + NAD(+) + 4 H(+)(out). NDH-1 shuttles electrons from NADH, via FMN and iron-sulfur (Fe-S) centers, to quinones in the respiratory chain. The immediate electron acceptor for the enzyme in this species is believed to be ubiquinone. Couples the redox reaction to proton translocation (for every two electrons transferred, four hydrogen ions are translocated across the cytoplasmic membrane), and thus conserves the redox energy in a proton gradient. This subunit may bind ubiquinone. The chain is NADH-quinone oxidoreductase subunit H from Thermobifida fusca (strain YX).